The sequence spans 332 residues: Casein kinase I isoform 2 (332 aa).

Residues 11-282 (FRIGQKIGSG…YLKRLFRELF (272 aa)) form the Protein kinase domain. ATP-binding positions include 17–25 (IGSGSFGEI) and Lys40. Asp133 acts as the Proton acceptor in catalysis. Positions 306–332 (EGRADQQQQQQQQQQRRGSEKEDEHPV) are disordered. The span at 311 to 320 (QQQQQQQQQQ) shows a compositional bias: low complexity. Basic and acidic residues predominate over residues 322–332 (RGSEKEDEHPV).

The protein belongs to the protein kinase superfamily. Ser/Thr protein kinase family. Mg(2+) is required as a cofactor.

It catalyses the reaction L-seryl-[protein] + ATP = O-phospho-L-seryl-[protein] + ADP + H(+). It carries out the reaction L-threonyl-[protein] + ATP = O-phospho-L-threonyl-[protein] + ADP + H(+). In terms of biological role, serine/threonine protein kinase. May phosphorylate ZC3H11 during unstressed conditions, leading to proteasome-dependent degradation of ZC3H11. This Trypanosoma brucei brucei protein is Casein kinase I isoform 2.